The chain runs to 383 residues: Arginine biosynthesis bifunctional protein ArgJ (383 aa).

6 residues coordinate substrate: Thr-146, Lys-168, Thr-179, Glu-259, Asn-378, and Thr-383. The Nucleophile role is filled by Thr-179.

It belongs to the ArgJ family. In terms of assembly, heterotetramer of two alpha and two beta chains.

It localises to the cytoplasm. It carries out the reaction N(2)-acetyl-L-ornithine + L-glutamate = N-acetyl-L-glutamate + L-ornithine. The enzyme catalyses L-glutamate + acetyl-CoA = N-acetyl-L-glutamate + CoA + H(+). It participates in amino-acid biosynthesis; L-arginine biosynthesis; L-ornithine and N-acetyl-L-glutamate from L-glutamate and N(2)-acetyl-L-ornithine (cyclic): step 1/1. Its pathway is amino-acid biosynthesis; L-arginine biosynthesis; N(2)-acetyl-L-ornithine from L-glutamate: step 1/4. Catalyzes two activities which are involved in the cyclic version of arginine biosynthesis: the synthesis of N-acetylglutamate from glutamate and acetyl-CoA as the acetyl donor, and of ornithine by transacetylation between N(2)-acetylornithine and glutamate. This Thermobifida fusca (strain YX) protein is Arginine biosynthesis bifunctional protein ArgJ.